A 185-amino-acid chain; its full sequence is Ribosome-recycling factor (185 aa).

This sequence belongs to the RRF family.

Its subcellular location is the cytoplasm. Functionally, responsible for the release of ribosomes from messenger RNA at the termination of protein biosynthesis. May increase the efficiency of translation by recycling ribosomes from one round of translation to another. The protein is Ribosome-recycling factor of Helicobacter hepaticus (strain ATCC 51449 / 3B1).